Consider the following 326-residue polypeptide: Glyoxalase I (326 aa).

2 VOC domains span residues 22-167 and 182-322; these read LLNH…LITY and KFNH…VVPH. Zn(2+) is bound at residue His-25. Arg-29 contributes to the substrate binding site. Residue Glu-89 participates in Zn(2+) binding. Residues Asn-93, Arg-113, His-117, and 147–148 each bind substrate; that span reads RQ. Residue His-117 coordinates Zn(2+). Glu-163 contacts Zn(2+). Active-site proton donor/acceptor residues include Glu-163 and Glu-318.

Belongs to the glyoxalase I family. Monomer. The cofactor is Zn(2+).

The catalysed reaction is (R)-S-lactoylglutathione = methylglyoxal + glutathione. The protein operates within secondary metabolite metabolism; methylglyoxal degradation; (R)-lactate from methylglyoxal: step 1/2. Catalyzes the conversion of hemimercaptal, formed from methylglyoxal and glutathione, to S-lactoylglutathione. Can use gamma-glutamylcysteine as a substrate. The polypeptide is Glyoxalase I (Saccharomyces cerevisiae (strain ATCC 204508 / S288c) (Baker's yeast)).